The primary structure comprises 240 residues: Peptidyl-tRNA hydrolase 2 (240 aa).

Position 60 (Tyr60) interacts with tRNA. The active-site Proton acceptor is His65. Positions 111, 113, and 159 each coordinate tRNA.

The protein belongs to the PTH family. Monomer.

It localises to the cytoplasm. It catalyses the reaction an N-acyl-L-alpha-aminoacyl-tRNA + H2O = an N-acyl-L-amino acid + a tRNA + H(+). In terms of biological role, hydrolyzes ribosome-free peptidyl-tRNAs (with 1 or more amino acids incorporated), which drop off the ribosome during protein synthesis, or as a result of ribosome stalling. Its function is as follows. Catalyzes the release of premature peptidyl moieties from peptidyl-tRNA molecules trapped in stalled 50S ribosomal subunits, and thus maintains levels of free tRNAs and 50S ribosomes. This is Peptidyl-tRNA hydrolase 2 from Corynebacterium jeikeium (strain K411).